Here is a 165-residue protein sequence, read N- to C-terminus: V-type proton ATPase 16 kDa proteolipid subunit (165 aa).

At 1 to 10 (MSSTFSGDET) the chain is on the lumenal side. A helical transmembrane segment spans residues 11–33 (APFFGFLGAAAALVFSCMGAAYG). Topologically, residues 34–55 (TAKSGVGVASMGVMRPELVMKS) are cytoplasmic. The helical transmembrane segment at 56-76 (IVPVVMAGVLGIYGLIIAVII) threads the bilayer. At 77 to 95 (STGINPKAKSYYLFDGYAH) the chain is on the lumenal side. The chain crosses the membrane as a helical span at residues 96–117 (LSSGLACGLAGLSAGMAIGIVG). Over 118 to 129 (DAGVRANAQQPK) the chain is Cytoplasmic. A helical transmembrane segment spans residues 130–155 (LFVGMILILIFAEALALYGLIVGIIL). Over 156–165 (SSRAGQSRAE) the chain is Lumenal.

The protein belongs to the V-ATPase proteolipid subunit family. In terms of assembly, V-ATPase is a heteromultimeric enzyme composed of a peripheral catalytic V1 complex (main components: subunits A, B, C, D, E, and F) attached to an integral membrane V0 proton pore complex (main component: the proteolipid protein; which is present as a hexamer that forms the proton-conducting pore).

The protein resides in the vacuole membrane. Functionally, proton-conducting pore forming subunit of the membrane integral V0 complex of vacuolar ATPase. V-ATPase is responsible for acidifying a variety of intracellular compartments in eukaryotic cells. This chain is V-type proton ATPase 16 kDa proteolipid subunit (CVA16-2), found in Gossypium hirsutum (Upland cotton).